A 118-amino-acid chain; its full sequence is uncharacterized protein (118 aa).

The protein to M.jannaschii MJ0310 and MJ1340.

This is an uncharacterized protein from Methanocaldococcus jannaschii (strain ATCC 43067 / DSM 2661 / JAL-1 / JCM 10045 / NBRC 100440) (Methanococcus jannaschii).